Here is a 383-residue protein sequence, read N- to C-terminus: Aliphatic nitrilase (383 aa).

A CN hydrolase domain is found at valine 13–leucine 288. The active-site Proton acceptor is glutamate 53. The Proton donor role is filled by lysine 136. The Nucleophile role is filled by cysteine 170. Positions alanine 359–alanine 383 are disordered.

The protein belongs to the carbon-nitrogen hydrolase superfamily. Nitrilase family.

It catalyses the reaction an aliphatic nitrile + 2 H2O = a carboxylate + NH4(+). In terms of biological role, acts on aliphatic nitriles such as acrylonitrile, crotononitrile and glutaronitrile. The sequence is that of Aliphatic nitrilase from Rhodococcus rhodochrous.